A 66-amino-acid chain; its full sequence is Beta-toxin Cbo1 (66 aa).

Residues 1-66 (KEGYLVNHST…VWPLPKKTCN (66 aa)) enclose the LCN-type CS-alpha/beta domain. Cystine bridges form between cysteine 12/cysteine 65, cysteine 16/cysteine 41, cysteine 25/cysteine 46, and cysteine 29/cysteine 48. At asparagine 66 the chain carries Asparagine amide.

It belongs to the long (4 C-C) scorpion toxin superfamily. Sodium channel inhibitor family. Beta subfamily. As to expression, expressed by the venom gland.

It is found in the secreted. Its function is as follows. Beta toxins bind voltage-independently at site-4 of sodium channels and shift the voltage of activation toward more negative potentials thereby affecting sodium channel activation and promoting spontaneous and repetitive firing. Is active on the human voltage-gated sodium channel Nav1.6/SCN8A when tested at 200 nM. In vivo, is toxic to mice when intraperitoneally injected. This chain is Beta-toxin Cbo1, found in Centruroides bonito (Scorpion).